Consider the following 141-residue polypeptide: Vesicle-associated membrane protein 4 (141 aa).

The interval 1–51 (MPPKFKRHLNDDDVTGSVKSERRNLLEDDSDEEEDFFLRGPSGPRFGPRND) is disordered. Topologically, residues 1-115 (MPPKFKRHLN…RRQMWWRGCK (115 aa)) are cytoplasmic. A phosphoserine mark is found at Ser-17 and Ser-30. In terms of domain architecture, v-SNARE coiled-coil homology spans 52 to 112 (KIKHVQNQVD…KQLRRQMWWR (61 aa)). Residues 116-136 (IKAIMALVAVILLLVIIILIV) form a helical; Anchor for type IV membrane protein membrane-spanning segment. At 137–141 (VKYRT) the chain is on the vesicular side.

This sequence belongs to the synaptobrevin family. Identified in a complex containing STX6, STX12, VAMP4 and VTI1A. Interacts with BAIAP3; this interaction is increased in the presence of calcium.

Its subcellular location is the golgi apparatus. The protein resides in the trans-Golgi network membrane. Involved in the pathway that functions to remove an inhibitor (probably synaptotagmin-4) of calcium-triggered exocytosis during the maturation of secretory granules. May be a marker for this sorting pathway that is critical for remodeling the secretory response of granule. The polypeptide is Vesicle-associated membrane protein 4 (VAMP4) (Bos taurus (Bovine)).